A 293-amino-acid chain; its full sequence is MAIVSAEKFVQAARKNGYAVGGFNTNNLEWTQAILRAAEAKQAPVLIQTSMGAAKYMGGYKVCQSLITNLVESMGITVPVAIHLDHGHYEDALECIEVGYTSIMFDGSHLPVEENLAKTAEVVKIAHAKGVSVEAEVGTIGGEEDGIIGKGELAPIEDAKAMVETGIDFLAAGIGNIHGPYPENWEGLALDHLEKLTAAVPGFPIVLHGGSGIPDDQIKEAIRLGVAKVNVNTESQIAFSNATREFARNYEANEAEYDGKKLFDPRKFLAPGMKAVQGAVEERIDVFGSANKA.

Position 50 (Ser50) interacts with D-glyceraldehyde 3-phosphate. The active-site Proton donor is the Asp85. Positions 86, 106, 136, and 178 each coordinate Zn(2+). Gly179 is a dihydroxyacetone phosphate binding site. His208 contacts Zn(2+). Residues 209–211 (GGS) and 230–233 (NVNT) contribute to the dihydroxyacetone phosphate site.

Belongs to the class II fructose-bisphosphate aldolase family. Requires Zn(2+) as cofactor.

It catalyses the reaction beta-D-fructose 1,6-bisphosphate = D-glyceraldehyde 3-phosphate + dihydroxyacetone phosphate. The protein operates within carbohydrate degradation; glycolysis; D-glyceraldehyde 3-phosphate and glycerone phosphate from D-glucose: step 4/4. Catalyzes the aldol condensation of dihydroxyacetone phosphate (DHAP or glycerone-phosphate) with glyceraldehyde 3-phosphate (G3P) to form fructose 1,6-bisphosphate (FBP) in gluconeogenesis and the reverse reaction in glycolysis. This is Fructose-bisphosphate aldolase (fba) from Streptococcus pyogenes serotype M3 (strain ATCC BAA-595 / MGAS315).